A 241-amino-acid chain; its full sequence is ATP-dependent Clp protease ATP-binding subunit CLPT2, chloroplastic (241 aa).

The N-terminal 75 residues, 1–75 (MAAHSSCNFA…PRRIHKSAIS (75 aa)), are a transit peptide targeting the chloroplast. Residues 91-237 (KPKWSWRAIK…ELESFASESG (147 aa)) form the Clp R domain. Repeat stretches follow at residues 94-159 (WSWR…LGKA) and 171-237 (LTED…SESG).

The protein belongs to the ClpA/ClpB family. As to quaternary structure, monomer and homodimer. The dimers monomerize before association to the P-ring. Component of the chloroplastic Clp protease core complex which consist of at least 16 proteins: CLPP4 (3 copies), CLPP5 (3 copies), CLPR4 (2 copies), ClpP1 (1 copy), CLPP6 (1 copy), CLPR2 (1 copy), CLPT1 (1 copy), CLPT2 (1 copy) and 3 copies of CLPP3 and/or CLPR1 and/or CLPR3. Interacts with AHK2. Interacts with CPN21. No interactions with CLPS1.

It localises to the plastid. It is found in the chloroplast. In terms of biological role, accessory protein regulating the assembly of the plastidial Clp protease system. CLPT1 first binds to the heptameric P-ring containing the CLP3-6 subunits followed by CLPT2, and only then does the P-ring combine with the R-ring composed of the clpP1 and CLPR1-4 subunits. Once the core complex is fully assembled, it then associates to the CLPC chaperone partner to form the functional protease. CLPT2 and CLPT1 are partially redundant. This is ATP-dependent Clp protease ATP-binding subunit CLPT2, chloroplastic from Arabidopsis thaliana (Mouse-ear cress).